The following is a 309-amino-acid chain: tRNA pseudouridine synthase B (309 aa).

Aspartate 52 serves as the catalytic Nucleophile.

Belongs to the pseudouridine synthase TruB family. Type 1 subfamily.

It catalyses the reaction uridine(55) in tRNA = pseudouridine(55) in tRNA. Its function is as follows. Responsible for synthesis of pseudouridine from uracil-55 in the psi GC loop of transfer RNAs. The chain is tRNA pseudouridine synthase B from Leptospira interrogans serogroup Icterohaemorrhagiae serovar Lai (strain 56601).